A 627-amino-acid polypeptide reads, in one-letter code: (-)-alpha-pinene synthase 2, chloroplastic (627 aa).

Residues methionine 1 to leucine 36 constitute a chloroplast transit peptide. 3 residues coordinate Mg(2+): aspartate 378, aspartate 382, and aspartate 530. Residues aspartate 378–aspartate 382 carry the DDXXD motif motif.

Belongs to the terpene synthase family. Tpsd subfamily. Requires Mg(2+) as cofactor. Mn(2+) is required as a cofactor.

It is found in the plastid. The protein resides in the chloroplast. It carries out the reaction (2E)-geranyl diphosphate = (1S,5S)-beta-pinene + diphosphate. The catalysed reaction is (2E)-geranyl diphosphate = (1S,5S)-alpha-pinene + diphosphate. It functions in the pathway terpene metabolism; oleoresin biosynthesis. Terpene synthase (TPS) involved in the biosynthesis of monoterpene natural products included in conifer oleoresin secretions and volatile emissions; these compounds contribute to biotic and abiotic stress defense against herbivores and pathogens. Catalyzes the conversion of (2E)-geranyl diphosphate (GPP) to (1S,5S)-beta-pinene. The polypeptide is (-)-alpha-pinene synthase 2, chloroplastic (Picea glauca (White spruce)).